The sequence spans 351 residues: Selenide, water dikinase (351 aa).

Selenocysteine 15 is an active-site residue. A non-standard amino acid (selenocysteine) is located at residue selenocysteine 15. ATP is bound by residues lysine 18 and 47–49; that span reads DNE. Aspartate 50 is a binding site for Mg(2+). Residues aspartate 67, aspartate 90, and 138-140 each bind ATP; that span reads GHS. A Mg(2+)-binding site is contributed by aspartate 90. Aspartate 227 contacts Mg(2+).

Belongs to the selenophosphate synthase 1 family. Class I subfamily. As to quaternary structure, homodimer. Mg(2+) serves as cofactor.

The enzyme catalyses hydrogenselenide + ATP + H2O = selenophosphate + AMP + phosphate + 2 H(+). Synthesizes selenophosphate from selenide and ATP. This is Selenide, water dikinase from Nitratidesulfovibrio vulgaris (strain DP4) (Desulfovibrio vulgaris).